The following is a 355-amino-acid chain: Probable nitronate monooxygenase (355 aa).

FMN contacts are provided by residues N71, Q175, G180, G218, and 237-240 (QMGT).

Belongs to the nitronate monooxygenase family. NMO class I subfamily. Requires FMN as cofactor.

It carries out the reaction 3 propionate 3-nitronate + 3 O2 + H2O = 3 3-oxopropanoate + 2 nitrate + nitrite + H2O2 + 3 H(+). Functionally, nitronate monooxygenase that uses molecular oxygen to catalyze the oxidative denitrification of alkyl nitronates. Acts on propionate 3-nitronate (P3N), the presumed physiological substrate. Probably functions in the detoxification of P3N, a metabolic poison produced by plants and fungi as a defense mechanism. The chain is Probable nitronate monooxygenase from Staphylococcus aureus (strain MRSA252).